The sequence spans 81 residues: uncharacterized protein (81 aa).

The interval 55 to 81 is disordered; sequence LDKRNSNNKIEKSENTGENHDNNQDQK.

This is an uncharacterized protein from Thermoproteus tenax virus 1 (strain KRA1) (TTV1).